The sequence spans 444 residues: MLRNDTITAIATPPGEGSIAIVRVSGPDAISISDRIFSGNIAGYASHTAHLGTVSHNAVCIDQALVLVMRAPRSFTGEDIVEFQCHGGYFACSQIVNALLAEGARAALPGEFSQRAFLNGKIDLIQAEAIQQLIAADNIDAFRIAQNQFQGHTSQAISSISSLIIEALAYIEVLADFPEEDIETEDSLPKHRIMEALSITDELLSSFDEGQRLAQGTSIVLAGLPNAGKSSILNALTQKNRAIVTDIPGTTRDILEENWVLQGKNLRLIDSAGLRETENLVEKEGIARAREAMSQAEGILWVVDASQPLPEFPTILYQKPTILLWNKCDIVSPPQIEVPFQQISVSAKTGEGLLELKQALQKWLNTTQLGKSSKIFLVSARHHSLLHSVYTCLTAALNGFTEHLPNECIALDLRQALHSIGNLSGSEVTENVLGEIFSKFCIGK.

(6S)-5-formyl-5,6,7,8-tetrahydrofolate contacts are provided by Arg-23, Glu-82, and Lys-121. The TrmE-type G domain maps to 216–365 (GTSIVLAGLP…LKQALQKWLN (150 aa)). Position 226 (Asn-226) interacts with K(+). GTP is bound by residues 226–231 (NAGKSS), 245–251 (TDIPGTT), and 270–273 (DSAG). Ser-230 lines the Mg(2+) pocket. 3 residues coordinate K(+): Thr-245, Ile-247, and Thr-250. Thr-251 is a Mg(2+) binding site. Lys-444 contributes to the (6S)-5-formyl-5,6,7,8-tetrahydrofolate binding site.

The protein belongs to the TRAFAC class TrmE-Era-EngA-EngB-Septin-like GTPase superfamily. TrmE GTPase family. Homodimer. Heterotetramer of two MnmE and two MnmG subunits. The cofactor is K(+).

It is found in the cytoplasm. In terms of biological role, exhibits a very high intrinsic GTPase hydrolysis rate. Involved in the addition of a carboxymethylaminomethyl (cmnm) group at the wobble position (U34) of certain tRNAs, forming tRNA-cmnm(5)s(2)U34. This chain is tRNA modification GTPase MnmE, found in Chlamydia trachomatis serovar L2 (strain ATCC VR-902B / DSM 19102 / 434/Bu).